The primary structure comprises 547 residues: Probable pectinesterase/pectinesterase inhibitor 12 (547 aa).

The signal sequence occupies residues 1 to 23; it reads MALSSFNLSSLLFLLFFTPSVFS. The interval 31 to 185 is pectinesterase inhibitor 12; sequence NPHETSATSF…YKHISNSLSA (155 aa). Residues N131, N247, N260, and N303 are each glycosylated (N-linked (GlcNAc...) asparagine). Positions 237-533 are pectinesterase 12; it reads SLVVAADGTG…FTATEFITGD (297 aa). Positions 312 and 342 each coordinate substrate. Residue D365 is the Proton donor; for pectinesterase activity of the active site. C379 and C399 form a disulfide bridge. Catalysis depends on D386, which acts as the Nucleophile; for pectinesterase activity. N-linked (GlcNAc...) asparagine glycosylation is found at N432 and N443. Substrate contacts are provided by R454 and W456. A glycan (N-linked (GlcNAc...) asparagine) is linked at N523.

In the N-terminal section; belongs to the PMEI family. This sequence in the C-terminal section; belongs to the pectinesterase family. In terms of tissue distribution, expressed in siliques.

The protein localises to the secreted. The protein resides in the cell wall. The catalysed reaction is [(1-&gt;4)-alpha-D-galacturonosyl methyl ester](n) + n H2O = [(1-&gt;4)-alpha-D-galacturonosyl](n) + n methanol + n H(+). The protein operates within glycan metabolism; pectin degradation; 2-dehydro-3-deoxy-D-gluconate from pectin: step 1/5. In terms of biological role, acts in the modification of cell walls via demethylesterification of cell wall pectin. The chain is Probable pectinesterase/pectinesterase inhibitor 12 (PME12) from Arabidopsis thaliana (Mouse-ear cress).